The following is a 401-amino-acid chain: S-adenosylmethionine synthase (401 aa).

Position 16 (His16) interacts with ATP. Residue Asp18 coordinates Mg(2+). Glu44 contributes to the K(+) binding site. Residues Glu57 and Gln100 each coordinate L-methionine. The interval 100–110 (QSPDIAQGVNE) is flexible loop. Residues 174–176 (DAK), 241–242 (RF), Asp250, 256–257 (RK), Ala273, and Lys277 contribute to the ATP site. Asp250 provides a ligand contact to L-methionine. Residue Lys281 coordinates L-methionine.

Belongs to the AdoMet synthase family. As to quaternary structure, homotetramer; dimer of dimers. Mg(2+) serves as cofactor. K(+) is required as a cofactor.

Its subcellular location is the cytoplasm. It catalyses the reaction L-methionine + ATP + H2O = S-adenosyl-L-methionine + phosphate + diphosphate. Its pathway is amino-acid biosynthesis; S-adenosyl-L-methionine biosynthesis; S-adenosyl-L-methionine from L-methionine: step 1/1. Functionally, catalyzes the formation of S-adenosylmethionine (AdoMet) from methionine and ATP. The overall synthetic reaction is composed of two sequential steps, AdoMet formation and the subsequent tripolyphosphate hydrolysis which occurs prior to release of AdoMet from the enzyme. This Streptococcus equi subsp. zooepidemicus (strain H70) protein is S-adenosylmethionine synthase.